Consider the following 415-residue polypeptide: Glucose-1-phosphate adenylyltransferase (415 aa).

Residues Y100, G165, 182 to 183, and S200 each bind alpha-D-glucose 1-phosphate; that span reads EK.

It belongs to the bacterial/plant glucose-1-phosphate adenylyltransferase family. As to quaternary structure, homotetramer.

It carries out the reaction alpha-D-glucose 1-phosphate + ATP + H(+) = ADP-alpha-D-glucose + diphosphate. Its pathway is glycan biosynthesis; glycogen biosynthesis. In terms of biological role, involved in the biosynthesis of ADP-glucose, a building block required for the elongation reactions to produce glycogen. Catalyzes the reaction between ATP and alpha-D-glucose 1-phosphate (G1P) to produce pyrophosphate and ADP-Glc. The protein is Glucose-1-phosphate adenylyltransferase of Bifidobacterium animalis subsp. lactis (strain AD011).